Reading from the N-terminus, the 167-residue chain is MIRIGHGFDVHAFGQDRPLMICGVAVPYHTGFIAHSDGDVALHALSDALIGAAALGDIGKLFPDTDMQYKNADSRKLLIEAYRQVQATGYVVGNVDVTIIAQAPKMRPYIDQMRQVIADDLNCDISCVNVKATTTEKLGFTGRGEGIACEAVALLIKPALCSSYRNI.

2 residues coordinate a divalent metal cation: D9 and H11. 4-CDP-2-C-methyl-D-erythritol 2-phosphate is bound by residues 9–11 (DVH) and 35–36 (HS). H43 serves as a coordination point for a divalent metal cation. 4-CDP-2-C-methyl-D-erythritol 2-phosphate is bound by residues 57-59 (DIG), 62-66 (FPDTD), 133-136 (TTTE), F140, and R143.

It belongs to the IspF family. In terms of assembly, homotrimer. It depends on a divalent metal cation as a cofactor.

It catalyses the reaction 4-CDP-2-C-methyl-D-erythritol 2-phosphate = 2-C-methyl-D-erythritol 2,4-cyclic diphosphate + CMP. Its pathway is isoprenoid biosynthesis; isopentenyl diphosphate biosynthesis via DXP pathway; isopentenyl diphosphate from 1-deoxy-D-xylulose 5-phosphate: step 4/6. In terms of biological role, involved in the biosynthesis of isopentenyl diphosphate (IPP) and dimethylallyl diphosphate (DMAPP), two major building blocks of isoprenoid compounds. Catalyzes the conversion of 4-diphosphocytidyl-2-C-methyl-D-erythritol 2-phosphate (CDP-ME2P) to 2-C-methyl-D-erythritol 2,4-cyclodiphosphate (ME-CPP) with a corresponding release of cytidine 5-monophosphate (CMP). This chain is 2-C-methyl-D-erythritol 2,4-cyclodiphosphate synthase, found in Glaesserella parasuis serovar 5 (strain SH0165) (Haemophilus parasuis).